A 144-amino-acid polypeptide reads, in one-letter code: Large ribosomal subunit protein uL16 (144 aa).

This sequence belongs to the universal ribosomal protein uL16 family. Part of the 50S ribosomal subunit.

In terms of biological role, binds 23S rRNA and is also seen to make contacts with the A and possibly P site tRNAs. This Latilactobacillus sakei subsp. sakei (strain 23K) (Lactobacillus sakei subsp. sakei) protein is Large ribosomal subunit protein uL16.